Reading from the N-terminus, the 207-residue chain is dITP/XTP pyrophosphatase (207 aa).

11–16 (TGNPGK) lines the substrate pocket. Asp-72 functions as the Proton acceptor in the catalytic mechanism. Position 72 (Asp-72) interacts with Mg(2+). Substrate-binding positions include Ser-73, 154 to 157 (FGYD), Lys-177, and 182 to 183 (HR).

Belongs to the HAM1 NTPase family. In terms of assembly, homodimer. Mg(2+) serves as cofactor.

The enzyme catalyses XTP + H2O = XMP + diphosphate + H(+). It carries out the reaction dITP + H2O = dIMP + diphosphate + H(+). The catalysed reaction is ITP + H2O = IMP + diphosphate + H(+). Functionally, pyrophosphatase that catalyzes the hydrolysis of nucleoside triphosphates to their monophosphate derivatives, with a high preference for the non-canonical purine nucleotides XTP (xanthosine triphosphate), dITP (deoxyinosine triphosphate) and ITP. Seems to function as a house-cleaning enzyme that removes non-canonical purine nucleotides from the nucleotide pool, thus preventing their incorporation into DNA/RNA and avoiding chromosomal lesions. This Thermus thermophilus (strain ATCC BAA-163 / DSM 7039 / HB27) protein is dITP/XTP pyrophosphatase.